Reading from the N-terminus, the 193-residue chain is UMP-CMP kinase (193 aa).

13–18 (GAGKGT) lines the ATP pocket. Residues 33–63 (SAGDLLRDERKKPDSQYGELIESYIRDGKIV) are NMP. A ribonucleoside 5'-phosphate-binding positions include R39, 61–63 (KIV), and 93–96 (GFPR). Position 100 (N100) interacts with CMP. The segment at 133–143 (ERGKSSGRSDD) is LID. R134 lines the ATP pocket. A ribonucleoside 5'-phosphate is bound by residues R140 and R151. K179 provides a ligand contact to ATP.

Belongs to the adenylate kinase family. UMP-CMP kinase subfamily. In terms of assembly, monomer. It depends on Mg(2+) as a cofactor.

The protein resides in the nucleus. It is found in the cytoplasm. It carries out the reaction CMP + ATP = CDP + ADP. The enzyme catalyses dCMP + ATP = dCDP + ADP. The catalysed reaction is UMP + ATP = UDP + ADP. It catalyses the reaction a 2'-deoxyribonucleoside 5'-diphosphate + ATP = a 2'-deoxyribonucleoside 5'-triphosphate + ADP. It carries out the reaction a ribonucleoside 5'-diphosphate + ATP = a ribonucleoside 5'-triphosphate + ADP. Catalyzes the phosphorylation of pyrimidine nucleoside monophosphates at the expense of ATP. Plays an important role in de novo pyrimidine nucleotide biosynthesis. Has preference for UMP and CMP as phosphate acceptors. Also displays broad nucleoside diphosphate kinase activity. The polypeptide is UMP-CMP kinase (cmpk1) (Xenopus laevis (African clawed frog)).